A 426-amino-acid polypeptide reads, in one-letter code: Protein sum2 (426 aa).

Positions 1–80 (MTEFIGSRIS…VKDLRIEEPA (80 aa)) constitute a Sm domain. Disordered regions lie at residues 79 to 100 (PATT…IGSN), 204 to 305 (GMPS…AKPR), and 348 to 426 (SCES…ANDQ). A compositionally biased stretch (pro residues) spans 84–93 (SAPPVQPPND). The segment covering 226–237 (VSASPSLQSMPP) has biased composition (polar residues). A compositionally biased stretch (low complexity) spans 261-278 (RNSTVTNDRVVNTTVDVS). The segment covering 279-298 (QSQTVETSGPSKEVPTTQPD) has biased composition (polar residues). One can recognise a DFDF domain in the interval 296 to 332 (QPDASAAKPRTEFDFQTANQKFQSMKDDLLKGKNDEE). Positions 335 to 351 (EFYKPKQSFFDNISCES) match the FFD box motif. Over residues 350–371 (ESKEKGMEAADRRALRDRERSL) the composition is skewed to basic and acidic residues. Residues 360–380 (DRRALRDRERSLNMETFGVAG) carry the TFG box motif. Residues 384-401 (RGRRGRGRGRGGRGRGRG) are compositionally biased toward basic residues. The span at 405-426 (NQYNQYRNSNGSQPRAQPANDQ) shows a compositional bias: polar residues.

Functionally, required for G2/M phase checkpoint control. The sequence is that of Protein sum2 (sum2) from Schizosaccharomyces pombe (strain 972 / ATCC 24843) (Fission yeast).